Here is an 802-residue protein sequence, read N- to C-terminus: MEEEGGSSGGAAGTSADGGDGGEQLLTVKHELRTANLTGHAERVGIENFELLKVLGTGAYGKVFLVRKISGHDTGKLYAMKVLKKATIVQKAKTTEHTRTERQVLEHTRQSPFLVTLHYAFQTETKLHLILDYINGGELFTHLSQRERFTEHEVQIYVGEIVLALEHLHKLGIIYRDIKLENILLDSNGHVMLTDFGLSKEFVADETERAYSFCGTIEYMAPDIVRGGDSGHDKAVDWWSLGVLMYELLTGASPFTVDGEKNSQAEISRRILKSEPPYPQEMSALAKDLIQHLLMKDPKKRLGCGPRDADEIKEHLFFQKINWDDLAAKKVPAPFKPVIRDELDVSNFAEEFTEMDPTYSPAALPQSSEKLFQGYSFVAPSILFKRNAAVIDPLQFHMEVERPGVTNVARSAMMKDSPFYQHYDLDLKDKPLGEGSFSICRKCVHKKSNQAFAVKIISKRMEANTQKEITALKLCEGHPNIVKLHEVFHDQLHTFLVMELLNGGELFERIKKKKHFSETEASYIMRKLVSAVSHMHDVGVVHRDLKPENLLFTDENDNLEIKIIDFGFARPKPPDNQPLKTPCFTLHYAAPELLNQNGYDESCDLWSLGVILYTMLSGQVPFQSHDRSLTCTSAVEIMKKIKKGDFSFEGEAWKNVSQEAKDLIQGLLTVDPNKRLKMSGLRYNEWLQDGSQLSSNPLMTPDILGSSGAAVHTCVKATFHAFNKYKREGFCLQNVDKAPLAKRRKMKKTSTSTETRSSSSESSHSSSSHSHGKTTPTKTLQPSNPADSNNPETLFQFSDSVA.

Positions 1–22 (MEEEGGSSGGAAGTSADGGDGG) are enriched in gly residues. Positions 1–23 (MEEEGGSSGGAAGTSADGGDGGE) are disordered. In terms of domain architecture, Protein kinase 1 spans 49-318 (FELLKVLGTG…ADEIKEHLFF (270 aa)). ATP is bound by residues 55–63 (LGTGAYGKV) and Lys-81. The active-site Proton acceptor is the Asp-177. Ser-212 is subject to Phosphoserine; by autocatalysis. The AGC-kinase C-terminal domain maps to 319–387 (QKINWDDLAA…VAPSILFKRN (69 aa)). Residue Ser-360 is modified to Phosphoserine; by MAPK1, MAPK3 and MAPK14. A phosphoserine; by autocatalysis mark is found at Ser-376 and Ser-381. Residues 426–687 (DLKDKPLGEG…MSGLRYNEWL (262 aa)) form the Protein kinase 2 domain. ATP-binding positions include 432-440 (LGEGSFSIC) and Lys-455. The Proton acceptor role is filled by Asp-544. At Thr-581 the chain carries Phosphothreonine; by MAPK1, MAPK3 and MAPK14. Phosphoserine occurs at positions 647, 657, 691, and 695. At Thr-700 the chain carries Phosphothreonine; by MAPK1, MAPK3 and MAPK14. The interval 741 to 802 (AKRRKMKKTS…TLFQFSDSVA (62 aa)) is disordered. Positions 749–779 (TSTSTETRSSSSESSHSSSSHSHGKTTPTKT) are enriched in low complexity. 3 positions are modified to phosphoserine; by autocatalysis: Ser-750, Ser-752, and Ser-758. Residues 780–802 (LQPSNPADSNNPETLFQFSDSVA) show a composition bias toward polar residues. Residue Ser-798 is modified to Phosphoserine.

It belongs to the protein kinase superfamily. AGC Ser/Thr protein kinase family. S6 kinase subfamily. Forms a complex with either MAPK1/ERK2 or MAPK3/ERK1 in quiescent cells which transiently dissociates following mitogenic stimulation. Also associates with MAPK14/p38-alpha. Activated RPS6KA5 associates with and phosphorylates the NF-kappa-B p65 subunit RELA. Interacts with CREBBP and EP300. Requires Mg(2+) as cofactor. Post-translationally, ser-376 and Thr-581 phosphorylation is required for kinase activity. Ser-376 and Ser-212 are autophosphorylated by the C-terminal kinase domain, and their phosphorylation is essential for the catalytic activity of the N-terminal kinase domain. Phosphorylated at Ser-360, Thr-581 and Thr-700 by MAPK1/ERK2, MAPK3/ERK1 and MAPK14/p38-alpha. Autophosphorylated at Ser-750, Ser-752 and Ser-758 by the N-terminal kinase domain. In terms of processing, ubiquitinated.

It localises to the nucleus. It catalyses the reaction L-seryl-[protein] + ATP = O-phospho-L-seryl-[protein] + ADP + H(+). The enzyme catalyses L-threonyl-[protein] + ATP = O-phospho-L-threonyl-[protein] + ADP + H(+). Activated by phosphorylation at Ser-360, Thr-581 and Thr-700 by MAPK1/ERK2, MAPK3/ERK1 and MAPK14/p38-alpha, and by further autophosphorylation of Ser-212, Ser-376 and Ser-381 by the activated C-terminal kinase domain. The active N-terminal kinase domain finally phosphorylates downstream substrates, as well as Ser-750, Ser-752 and Ser-758 in its own C-terminal region. In terms of biological role, serine/threonine-protein kinase that is required for the mitogen or stress-induced phosphorylation of the transcription factors CREB1 and ATF1 and for the regulation of the transcription factors RELA, STAT3 and ETV1/ER81, and that contributes to gene activation by histone phosphorylation and functions in the regulation of inflammatory genes. Phosphorylates CREB1 and ATF1 in response to mitogenic or stress stimuli such as UV-C irradiation, epidermal growth factor (EGF) and anisomycin. Plays an essential role in the control of RELA transcriptional activity in response to TNF and upon glucocorticoid, associates in the cytoplasm with the glucocorticoid receptor NR3C1 and contributes to RELA inhibition and repression of inflammatory gene expression. In skeletal myoblasts is required for phosphorylation of RELA at 'Ser-276' during oxidative stress. In erythropoietin-stimulated cells, is necessary for the 'Ser-727' phosphorylation of STAT3 and regulation of its transcriptional potential. Phosphorylates ETV1/ER81 at 'Ser-191' and 'Ser-216', and thereby regulates its ability to stimulate transcription, which may be important during development and breast tumor formation. Directly represses transcription via phosphorylation of 'Ser-1' of histone H2A. Phosphorylates 'Ser-10' of histone H3 in response to mitogenics, stress stimuli and EGF, which results in the transcriptional activation of several immediate early genes, including proto-oncogenes c-fos/FOS and c-jun/JUN. May also phosphorylate 'Ser-28' of histone H3. Mediates the mitogen- and stress-induced phosphorylation of high mobility group protein 1 (HMGN1/HMG14). In lipopolysaccharide-stimulated primary macrophages, acts downstream of the Toll-like receptor TLR4 to limit the production of pro-inflammatory cytokines. Functions probably by inducing transcription of the MAP kinase phosphatase DUSP1 and the anti-inflammatory cytokine interleukin 10 (IL10), via CREB1 and ATF1 transcription factors. Plays a role in neuronal cell death by mediating the downstream effects of excitotoxic injury. Phosphorylates TRIM7 at 'Ser-107' in response to growth factor signaling via the MEK/ERK pathway, thereby stimulating its ubiquitin ligase activity. This Pongo abelii (Sumatran orangutan) protein is Ribosomal protein S6 kinase alpha-5 (RPS6KA5).